The sequence spans 96 residues: UPF0235 protein VCM66_0443 (96 aa).

The protein belongs to the UPF0235 family.

In Vibrio cholerae serotype O1 (strain M66-2), this protein is UPF0235 protein VCM66_0443.